We begin with the raw amino-acid sequence, 355 residues long: Phenylalanine--tRNA ligase alpha subunit (355 aa).

E273 is a Mg(2+) binding site.

It belongs to the class-II aminoacyl-tRNA synthetase family. Phe-tRNA synthetase alpha subunit type 1 subfamily. Tetramer of two alpha and two beta subunits. Requires Mg(2+) as cofactor.

It localises to the cytoplasm. It catalyses the reaction tRNA(Phe) + L-phenylalanine + ATP = L-phenylalanyl-tRNA(Phe) + AMP + diphosphate + H(+). This chain is Phenylalanine--tRNA ligase alpha subunit, found in Bifidobacterium longum (strain NCC 2705).